Consider the following 412-residue polypeptide: MTNDRVESSSGRAARKLRLALMGPAFIAAIGYIDPGNFATNIQAGASFGYKLLWVVVWANLMAMLIQVLSAKLGIATSKNLAEQIRDHYPRPVVWFYWVQAEIIAMATDLAEFIGAAIGFKLILGISLLQGAVLTGIATFLILMLQRRGQKPLEKVIGGLLLFVAAAYIVELIFSQPSLAQLSKGMIIPSLPNSEAVFLAAGVLGATIMPHVIYLHSSLTQHLHGGSRQQRYAATKWDVAIAMTIAGFVNLAMMATAAAAFHFSGHTGIADLDQAYLTLEPLLSHAAATVFGLSLVAAGLSSTVVGTLAGQVVMQGFVRFHIPLWVRRTITMMPSFIVILMGLDPTRILVMSQVLLSFGIALALVPLLIFTSDRTLMGDLVNTQWVKYIGWMIVVLVVALNIWLLVGTALGL.

Helical transmembrane passes span 19–39, 46–66, 94–114, 122–142, 156–176, 196–216, 241–261, 290–310, 329–349, 350–370, and 389–409; these read LALMGPAFIAAIGYIDPGNFA, ASFGYKLLWVVVWANLMAMLI, VWFYWVQAEIIAMATDLAEFI, LILGISLLQGAVLTGIATFLI, VIGGLLLFVAAAYIVELIFSQ, AVFLAAGVLGATIMPHVIYLH, IAMTIAGFVNLAMMATAAAAF, VFGLSLVAAGLSSTVVGTLAG, TITMMPSFIVILMGLDPTRIL, VMSQVLLSFGIALALVPLLIF, and IGWMIVVLVVALNIWLLVGTA.

It belongs to the NRAMP family.

The protein localises to the cell inner membrane. H(+)-stimulated, divalent metal cation uptake system. The sequence is that of Divalent metal cation transporter MntH from Citrobacter koseri (strain ATCC BAA-895 / CDC 4225-83 / SGSC4696).